The chain runs to 498 residues: Flagellin (498 aa).

Belongs to the bacterial flagellin family.

It localises to the secreted. The protein localises to the bacterial flagellum. In terms of biological role, flagellin is the subunit protein which polymerizes to form the filaments of bacterial flagella. The protein is Flagellin (fliC) of Escherichia coli (strain K12).